Reading from the N-terminus, the 449-residue chain is Na(+)/H(+) antiporter NhaA 1 (449 aa).

The next 11 helical transmembrane spans lie at Gly-38–Ala-58, Phe-79–Met-99, Val-117–Phe-137, Ala-145–Val-165, Val-175–Phe-195, Ser-198–Leu-218, Met-240–Ala-260, Phe-311–Asn-331, Pro-347–Phe-367, Gly-390–Phe-410, and Leu-422–Val-442.

Belongs to the NhaA Na(+)/H(+) (TC 2.A.33) antiporter family.

The protein resides in the cell inner membrane. It catalyses the reaction Na(+)(in) + 2 H(+)(out) = Na(+)(out) + 2 H(+)(in). Na(+)/H(+) antiporter that extrudes sodium in exchange for external protons. This chain is Na(+)/H(+) antiporter NhaA 1, found in Myxococcus xanthus (strain DK1622).